A 32-amino-acid chain; its full sequence is Delta-conotoxin-like CnVIB (32 aa).

3 disulfide bridges follow: Cys-3/Cys-18, Cys-10/Cys-22, and Cys-17/Cys-27. 4-hydroxyproline is present on residues Pro-6 and Pro-14.

This sequence belongs to the conotoxin O1 superfamily. As to expression, expressed by the venom duct.

It localises to the secreted. Delta-conotoxins bind to site 6 of voltage-gated sodium channels (Nav) and inhibit the inactivation process. This toxin acts on Nav1.4/SCN4A and Nav1.6/SCN8A (EC(50)=2.3 uM). The protein is Delta-conotoxin-like CnVIB of Conus consors (Singed cone).